Here is a 648-residue protein sequence, read N- to C-terminus: Forkhead box protein N1 (648 aa).

The disordered stretch occupies residues 1 to 105; that stretch reads MVSLPPPQSD…SDKYPGFGFE (105 aa). Residues 58–67 show a composition bias toward pro residues; it reads ERTPSLPPHS. The fork-head DNA-binding region spans 271–367; sequence KPIYSYSILI…EELQKWKRKD (97 aa). 3 disordered regions span residues 392 to 445, 458 to 508, and 623 to 648; these read LGSP…LLMG, LSPG…LLAE, and LEPT…VALA. The span at 462–473 shows a compositional bias: pro residues; it reads LAPPGPPQPLFP.

Expressed in thymus.

The protein localises to the nucleus. Functionally, transcriptional regulator which regulates the development, differentiation, and function of thymic epithelial cells (TECs) both in the prenatal and postnatal thymus. Acts as a master regulator of the TECs lineage development and is required from the onset of differentiation in progenitor TECs in the developing fetus to the final differentiation steps through which TECs mature to acquire their full functionality. Regulates, either directly or indirectly the expression of a variety of genes that mediate diverse aspects of thymus development and function, including MHC Class II, DLL4, CCL25, CTSL, CD40 and PAX1. Regulates the differentiation of the immature TECs into functional cortical TECs (cTECs) and medullary TECs (mTECs). Essential for maintenance of mTECs population in the postnatal thymus. Involved in the morphogenesis and maintenance of the three-dimensional thymic microstructure which is necessary for a fully functional thymus. Plays an important role in the maintenance of hematopoiesis and particularly T lineage progenitors within the bone marrow niche with age. Essential for the vascularization of the thymus anlage. Promotes the terminal differentiation of epithelial cells in the epidermis and hair follicles, partly by negatively regulating the activity of protein kinase C. Plays a crucial role in the early prenatal stages of T-cell ontogeny. This chain is Forkhead box protein N1 (FOXN1), found in Homo sapiens (Human).